Here is a 147-residue protein sequence, read N- to C-terminus: Hemoglobin subunit epsilon (147 aa).

The 145-residue stretch at 3–147 folds into the Globin domain; sequence HFTAEEKSVI…VATALAHKYH (145 aa). At Ser-51 the chain carries Phosphoserine. His-64 and His-93 together coordinate heme b.

This sequence belongs to the globin family. Red blood cells.

Its function is as follows. Hemoglobin epsilon chain is a beta-type chain found in early embryos. The protein is Hemoglobin subunit epsilon (HBE1) of Sus scrofa (Pig).